Reading from the N-terminus, the 500-residue chain is MKCTAREWLRVTTVLFMARAIPAMVVPNATLLEKLLEKYMDEDGEWWIAKQRGKRAITDNDMQSILDLHNKLRSQVYPTASNMEYMTWDVELERSAESWAESCLWEHGPASLLPSIGQNLGAHWGRYRPPTFHVQSWYDEVKDFSYPYEHECNPYCPFRCSGPVCTHYTQVVWATSNRIGCAINLCHNMNIWGQIWPKAVYLVCNYSPKGNWWGHAPYKHGRPCSACPPSFGGGCRENLCYKEGSDRYYPPREEETNEIERQQSQVHDTHVRTRSDDSSRNEVISAQQMSQIVSCEVRLRDQCKGTTCNRYECPAGCLDSKAKVIGSVHYEMQSSICRAAIHYGIIDNDGGWVDITRQGRKHYFIKSNRNGIQTIGKYQSANSFTVSKVTVQAVTCETTVEQLCPFHKPASHCPRVYCPRNCMQANPHYARVIGTRVYSDLSSICRAAVHAGVVRNHGGYVDVMPVDKRKTYIASFQNGIFSESLQNPPGGKAFRVFAVV.

Residues 1–23 form the signal peptide; the sequence is MKCTAREWLRVTTVLFMARAIPA. Residues 66–206 form the SCP domain; it reads LDLHNKLRSQ…PKAVYLVCNY (141 aa). A compositionally biased stretch (basic and acidic residues) spans 254 to 280; the sequence is EETNEIERQQSQVHDTHVRTRSDDSSR. A disordered region spans residues 254–281; that stretch reads EETNEIERQQSQVHDTHVRTRSDDSSRN. LCCL domains are found at residues 289–384 and 390–492; these read MSQI…ANSF and TVQA…PGGK. 4 cysteine pairs are disulfide-bonded: Cys-295–Cys-313, Cys-317–Cys-337, Cys-396–Cys-418, and Cys-422–Cys-445.

This sequence belongs to the CRISP family.

The protein resides in the secreted. This chain is Cysteine-rich secretory protein LCCL domain-containing 1 (CRISPLD1), found in Homo sapiens (Human).